Reading from the N-terminus, the 447-residue chain is N-succinylarginine dihydrolase (447 aa).

Substrate-binding positions include 19 to 28 (AGLSFGNEAS), Asn110, and 137 to 138 (HR). Glu174 is an active-site residue. Arg212 contributes to the substrate binding site. The active site involves His248. Asp250 and Asn359 together coordinate substrate. Residue Cys365 is the Nucleophile of the active site.

The protein belongs to the succinylarginine dihydrolase family. In terms of assembly, homodimer.

It catalyses the reaction N(2)-succinyl-L-arginine + 2 H2O + 2 H(+) = N(2)-succinyl-L-ornithine + 2 NH4(+) + CO2. It functions in the pathway amino-acid degradation; L-arginine degradation via AST pathway; L-glutamate and succinate from L-arginine: step 2/5. Catalyzes the hydrolysis of N(2)-succinylarginine into N(2)-succinylornithine, ammonia and CO(2). This is N-succinylarginine dihydrolase from Salmonella enteritidis PT4 (strain P125109).